The primary structure comprises 511 residues: Protein phosphatase 2C 7 (511 aa).

The first 19 residues, 1-19, serve as a signal peptide directing secretion; that stretch reads MEEISPAVALTLGLANTMC. A PPM-type phosphatase domain is found at 188-501; the sequence is LWGTISICGG…DNISIIVIDL (314 aa). The Mn(2+) site is built by Asp-242, Gly-243, Asp-432, and Asp-492.

It belongs to the PP2C family. In terms of assembly, interacts with PYL13. It depends on Mg(2+) as a cofactor. Requires Mn(2+) as cofactor. As to expression, expressed in seeds.

It carries out the reaction O-phospho-L-seryl-[protein] + H2O = L-seryl-[protein] + phosphate. The catalysed reaction is O-phospho-L-threonyl-[protein] + H2O = L-threonyl-[protein] + phosphate. In terms of biological role, key component and repressor of the abscisic acid (ABA) signaling pathway that regulates numerous ABA responses, such as stomatal closure, seed germination and inhibition of vegetative growth. This is Protein phosphatase 2C 7 (HAB2) from Arabidopsis thaliana (Mouse-ear cress).